A 374-amino-acid chain; its full sequence is Hydroxylysine kinase (374 aa).

Residue aspartate 228 is the Proton acceptor of the active site.

Belongs to the aminoglycoside phosphotransferase family.

It localises to the cytoplasm. The enzyme catalyses (5R)-5-hydroxy-L-lysine + GTP = (5R)-5-phosphooxy-L-lysine + GDP + H(+). Functionally, catalyzes the GTP-dependent phosphorylation of 5-hydroxy-L-lysine. The chain is Hydroxylysine kinase (hykk) from Xenopus laevis (African clawed frog).